The primary structure comprises 223 residues: Ribosomal RNA small subunit methyltransferase G (223 aa).

The S-adenosyl-L-methionine site is built by Gly85, Phe90, and Arg154.

The protein belongs to the methyltransferase superfamily. RNA methyltransferase RsmG family.

It localises to the cytoplasm. It carries out the reaction guanosine(527) in 16S rRNA + S-adenosyl-L-methionine = N(7)-methylguanosine(527) in 16S rRNA + S-adenosyl-L-homocysteine. Functionally, specifically methylates the N7 position of guanine in position 527 of 16S rRNA. This Rhodopseudomonas palustris (strain ATCC BAA-98 / CGA009) protein is Ribosomal RNA small subunit methyltransferase G.